The following is a 457-amino-acid chain: Ribosomal protein uS12 methylthiotransferase RimO (457 aa).

The 111-residue stretch at 30–140 (PTIGMVSLGC…VLDAVHGAVP (111 aa)) folds into the MTTase N-terminal domain. Positions 39, 75, 104, 171, 175, and 178 each coordinate [4Fe-4S] cluster. The region spanning 157 to 386 (LTPRHFSYLK…MQKAQAISEA (230 aa)) is the Radical SAM core domain. The region spanning 389 to 456 (AARIGQRLEV…EYDLWGRAVL (68 aa)) is the TRAM domain.

This sequence belongs to the methylthiotransferase family. RimO subfamily. [4Fe-4S] cluster serves as cofactor.

It is found in the cytoplasm. The enzyme catalyses L-aspartate(89)-[ribosomal protein uS12]-hydrogen + (sulfur carrier)-SH + AH2 + 2 S-adenosyl-L-methionine = 3-methylsulfanyl-L-aspartate(89)-[ribosomal protein uS12]-hydrogen + (sulfur carrier)-H + 5'-deoxyadenosine + L-methionine + A + S-adenosyl-L-homocysteine + 2 H(+). In terms of biological role, catalyzes the methylthiolation of an aspartic acid residue of ribosomal protein uS12. This Cereibacter sphaeroides (strain ATCC 17025 / ATH 2.4.3) (Rhodobacter sphaeroides) protein is Ribosomal protein uS12 methylthiotransferase RimO.